A 361-amino-acid chain; its full sequence is ATP phosphoribosyltransferase regulatory subunit (361 aa).

It belongs to the class-II aminoacyl-tRNA synthetase family. HisZ subfamily. In terms of assembly, heteromultimer composed of HisG and HisZ subunits.

It localises to the cytoplasm. It participates in amino-acid biosynthesis; L-histidine biosynthesis; L-histidine from 5-phospho-alpha-D-ribose 1-diphosphate: step 1/9. Functionally, required for the first step of histidine biosynthesis. May allow the feedback regulation of ATP phosphoribosyltransferase activity by histidine. The polypeptide is ATP phosphoribosyltransferase regulatory subunit (Thermus thermophilus (strain ATCC 27634 / DSM 579 / HB8)).